A 396-amino-acid chain; its full sequence is MNQAENRIDQILKRGVAEVIVEEDFKKLLLSGKKLRLKEGFDPSSPDIHLGHMVALRKLRQLQDLGHQVVLIVGDWTAQIGDPSGASVTRPMLSAEQVKANAKTYLEQFFKIVDKDKTEVRWQSEWYANFKLEDVVRLSSKFTVAQMLARDDFAKRYAAGKPISVTELLYPMLQAYDSVMVKSDVEFGGTDQKFNLLVGRELQEMLGQKPQQVLMVPILVGTDGVHKMSKSLGNYIGVAEEPTEIFGKCMSIPDELILQYFELVTDIPATEIADFKNQMANGLVNPMVLKKRLARELITQLYSAAAAEEADAQFTRVVQRGEIPEDMPECRLENGESICVIDFIIKADLAKSKSEARRLLEQGGVEINSAKISDPGTTVKCGDIIKAGKRRYSKAV.

The short motif at 43 to 52 (PSSPDIHLGH) is the 'HIGH' region element. A 'KMSKS' region motif is present at residues 227 to 231 (KMSKS). K230 provides a ligand contact to ATP. The region spanning 338–396 (ICVIDFIIKADLAKSKSEARRLLEQGGVEINSAKISDPGTTVKCGDIIKAGKRRYSKAV) is the S4 RNA-binding domain.

It belongs to the class-I aminoacyl-tRNA synthetase family. TyrS type 2 subfamily. In terms of assembly, homodimer.

It is found in the cytoplasm. The enzyme catalyses tRNA(Tyr) + L-tyrosine + ATP = L-tyrosyl-tRNA(Tyr) + AMP + diphosphate + H(+). Its function is as follows. Catalyzes the attachment of tyrosine to tRNA(Tyr) in a two-step reaction: tyrosine is first activated by ATP to form Tyr-AMP and then transferred to the acceptor end of tRNA(Tyr). The protein is Tyrosine--tRNA ligase of Dehalococcoides mccartyi (strain ATCC BAA-2266 / KCTC 15142 / 195) (Dehalococcoides ethenogenes (strain 195)).